Consider the following 337-residue polypeptide: Pentalenene synthase (337 aa).

Positions 80, 84, 219, 223, and 227 each coordinate Mg(2+). The DDXXD motif signature appears at 80 to 84 (DDLFD).

Belongs to the terpene synthase family. Monomer. Mg(2+) is required as a cofactor.

It catalyses the reaction (2E,6E)-farnesyl diphosphate = pentalenene + diphosphate. The protein operates within sesquiterpene biosynthesis; pentalenene biosynthesis; pentalenene from farnesyl diphosphate: step 1/1. It functions in the pathway antibiotic biosynthesis; pentalenolactone biosynthesis. Functionally, catalyzes the cyclization of farnesyl diphosphate (FPP) to the tricyclic sesquiterpene pentalenene, which is the hydrocarbon precursor of the pentalenolactone family of antibiotics produced by a variety of Streptomyces species. This chain is Pentalenene synthase (pntA), found in Streptomyces arenae.